A 484-amino-acid chain; its full sequence is Replication factor C large subunit (484 aa).

Residue 46–53 participates in ATP binding; that stretch reads GPPGSGKT. A compositionally biased stretch (basic and acidic residues) spans 463 to 478; it reads NADTKEKEKKDPKKQA. The segment at 463–484 is disordered; it reads NADTKEKEKKDPKKQATLDSFF.

It belongs to the activator 1 small subunits family. RfcL subfamily. Heteromultimer composed of small subunits (RfcS) and large subunits (RfcL).

Its function is as follows. Part of the RFC clamp loader complex which loads the PCNA sliding clamp onto DNA. In Methanococcus maripaludis (strain C6 / ATCC BAA-1332), this protein is Replication factor C large subunit.